The sequence spans 745 residues: Ribosomal protein S6 kinase alpha-6 (745 aa).

Positions 1–28 are disordered; the sequence is MLPFAPQDEPWDREMEVFSGGGASSGEV. The Protein kinase 1 domain occupies 73–330; the sequence is FELLKVLGQG…VEEIKRHLFF (258 aa). ATP contacts are provided by residues 79 to 87 and Lys-105; that span reads LGQGSFGKV. Catalysis depends on Asp-198, which acts as the Proton acceptor. Phosphoserine occurs at positions 232, 372, and 389. The 70-residue stretch at 331-400 folds into the AGC-kinase C-terminal domain; that stretch reads ANIDWDKLYK…VATSIAEEYK (70 aa). Residues 426-683 enclose the Protein kinase 2 domain; it reads YELKEDIGVG…AEQILKHSWI (258 aa). ATP-binding positions include 432–440 and Lys-455; that span reads IGVGSYSVC. The Proton acceptor role is filled by Asp-543. Phosphothreonine is present on Thr-581.

The protein belongs to the protein kinase superfamily. AGC Ser/Thr protein kinase family. S6 kinase subfamily. As to quaternary structure, forms a complex with MAPK3/ERK1 but not with MAPK9 or MAPK14 in serum-starved cells. Mg(2+) is required as a cofactor. Phosphorylated at Ser-232, Ser-372, and Ser-389 in serum-starved cells.

It localises to the cytoplasm. The protein resides in the cytosol. It is found in the nucleus. The enzyme catalyses L-seryl-[protein] + ATP = O-phospho-L-seryl-[protein] + ADP + H(+). The catalysed reaction is L-threonyl-[protein] + ATP = O-phospho-L-threonyl-[protein] + ADP + H(+). With respect to regulation, constitutively activated by phosphorylation at Ser-232, Ser-372, and Ser-389 in serum-starved cells. Does not require growth factor stimulation for significant kinase activity. Functionally, constitutively active serine/threonine-protein kinase that exhibits growth-factor-independent kinase activity and that may participate in p53/TP53-dependent cell growth arrest signaling and play an inhibitory role during embryogenesis. In Homo sapiens (Human), this protein is Ribosomal protein S6 kinase alpha-6 (RPS6KA6).